Here is a 323-residue protein sequence, read N- to C-terminus: D-alanine--D-alanine ligase (323 aa).

An ATP-grasp domain is found at 121-317 (RIWFLTNNIN…FTNLIEEIIK (197 aa)). 147-199 (PMKRPYVIKPLAQGSSIGVEVIFAEDDFNFADYDFPYGDQVIIEQYIKGQGRE) contributes to the ATP binding site. Residues Glu-270, Glu-284, and Asn-286 each contribute to the Mg(2+) site.

The protein belongs to the D-alanine--D-alanine ligase family. Mg(2+) is required as a cofactor. Mn(2+) serves as cofactor.

Its subcellular location is the cytoplasm. It carries out the reaction 2 D-alanine + ATP = D-alanyl-D-alanine + ADP + phosphate + H(+). Its pathway is cell wall biogenesis; peptidoglycan biosynthesis. Cell wall formation. The sequence is that of D-alanine--D-alanine ligase from Rickettsia peacockii (strain Rustic).